The chain runs to 426 residues: 3-phosphoshikimate 1-carboxyvinyltransferase (426 aa).

Lys-22, Ser-23, and Arg-27 together coordinate 3-phosphoshikimate. Phosphoenolpyruvate is bound at residue Lys-22. Positions 96 and 124 each coordinate phosphoenolpyruvate. 7 residues coordinate 3-phosphoshikimate: Ser-170, Ser-171, Gln-172, Ser-198, Asp-314, Asn-337, and Lys-341. Residue Gln-172 coordinates phosphoenolpyruvate. Asp-314 serves as the catalytic Proton acceptor. Phosphoenolpyruvate is bound by residues Arg-345, Arg-387, and Lys-412.

It belongs to the EPSP synthase family. In terms of assembly, monomer.

It localises to the cytoplasm. The catalysed reaction is 3-phosphoshikimate + phosphoenolpyruvate = 5-O-(1-carboxyvinyl)-3-phosphoshikimate + phosphate. It functions in the pathway metabolic intermediate biosynthesis; chorismate biosynthesis; chorismate from D-erythrose 4-phosphate and phosphoenolpyruvate: step 6/7. Catalyzes the transfer of the enolpyruvyl moiety of phosphoenolpyruvate (PEP) to the 5-hydroxyl of shikimate-3-phosphate (S3P) to produce enolpyruvyl shikimate-3-phosphate and inorganic phosphate. The polypeptide is 3-phosphoshikimate 1-carboxyvinyltransferase (Vibrio campbellii (strain ATCC BAA-1116)).